The sequence spans 766 residues: Darlin (766 aa).

ARM repeat units follow at residues Q82 to Y119, D167 to D208, E423 to L464, and P465 to D537. The interval E561–K585 is disordered. The ARM 5 repeat unit spans residues H610–K649.

It belongs to the RAP1GDS1 family. Binds to small GTPases racE, racC but not rab21. Binds preferentially to GDP-bound racE.

Its function is as follows. Part of a signaling pathway that initiates the aggregation and leads to the formation of aggregation centers or streams. Not essential for cytokinesis, pinocytosis or phagocytosis. Not essential for development, except in starvation-induced aggregation. The protein is Darlin (darA) of Dictyostelium discoideum (Social amoeba).